Consider the following 296-residue polypeptide: 33 kDa chaperonin (296 aa).

Intrachain disulfides connect C233–C235 and C267–C270.

The protein belongs to the HSP33 family. Under oxidizing conditions two disulfide bonds are formed involving the reactive cysteines. Under reducing conditions zinc is bound to the reactive cysteines and the protein is inactive.

It localises to the cytoplasm. In terms of biological role, redox regulated molecular chaperone. Protects both thermally unfolding and oxidatively damaged proteins from irreversible aggregation. Plays an important role in the bacterial defense system toward oxidative stress. The polypeptide is 33 kDa chaperonin (Actinobacillus pleuropneumoniae serotype 7 (strain AP76)).